Consider the following 196-residue polypeptide: Golgi to ER traffic protein 1 (196 aa).

The Lumenal portion of the chain corresponds to 1-10 (MFLDLHPYTI). A helical transmembrane segment spans residues 11–30 (LVSIFIILLVKQIVGRIGKS). Residues 31-114 (TIQEFVWLLY…SIDKLANVLL (84 aa)) are Cytoplasmic-facing. Residues 76–114 (AKWTKLNRQADKLTSEIQKLNEEIRQSKASIDKLANVLL) are a coiled coil. Residues 115–135 (MVLTTLPIWVARIFFRKTHLF) form a helical membrane-spanning segment. Over 136 to 159 (YLRSGIFPRYIEWVLALPFFPSGA) the chain is Lumenal. The chain crosses the membrane as a helical span at residues 160-176 (VGLTVWMFAANSVIHNV). Residues 177 to 196 (ISLVSFAFEKRVEKPVRQKK) are Cytoplasmic-facing.

Belongs to the WRB/GET1 family. As to quaternary structure, component of the Golgi to ER traffic (GET) complex, which is composed of GET1, GET2 and GET3. Within the complex, GET1 and GET2 form a heterotetramer which is stabilized by phosphatidylinositol binding and which binds to the GET3 homodimer.

The protein localises to the endoplasmic reticulum membrane. Its subcellular location is the golgi apparatus membrane. Required for the post-translational delivery of tail-anchored (TA) proteins to the endoplasmic reticulum. Together with GET2, acts as a membrane receptor for soluble GET3, which recognizes and selectively binds the transmembrane domain of TA proteins in the cytosol. The GET complex cooperates with the HDEL receptor ERD2 to mediate the ATP-dependent retrieval of resident ER proteins that contain a C-terminal H-D-E-L retention signal from the Golgi to the ER. This is Golgi to ER traffic protein 1 from Candida tropicalis (strain ATCC MYA-3404 / T1) (Yeast).